A 299-amino-acid polypeptide reads, in one-letter code: Protoheme IX farnesyltransferase (299 aa).

9 helical membrane-spanning segments follow: residues 27-47, 53-73, 97-117, 121-141, 149-169, 175-195, 222-242, 244-264, and 273-293; these read VVAL…HEHF, LIAL…NHLI, FNVL…LMLW, LTAY…TLYL, IVIA…SITG, AWLL…ALAI, ILLY…VGMA, YLYL…AIKL, and AIEM…ALLL.

The protein belongs to the UbiA prenyltransferase family. Protoheme IX farnesyltransferase subfamily.

Its subcellular location is the cell inner membrane. It catalyses the reaction heme b + (2E,6E)-farnesyl diphosphate + H2O = Fe(II)-heme o + diphosphate. It functions in the pathway porphyrin-containing compound metabolism; heme O biosynthesis; heme O from protoheme: step 1/1. Converts heme B (protoheme IX) to heme O by substitution of the vinyl group on carbon 2 of heme B porphyrin ring with a hydroxyethyl farnesyl side group. In Vibrio vulnificus (strain YJ016), this protein is Protoheme IX farnesyltransferase.